The following is a 209-amino-acid chain: Glutathione S-transferase 1-1 (209 aa).

A GST N-terminal domain is found at 1–81 (MADFYYLPGS…YLVEKYGKTD (81 aa)). Glutathione-binding positions include Ser-10, 51–53 (HTI), and 65–67 (ESR). One can recognise a GST C-terminal domain in the interval 87–209 (CPKKRAVINQ…GCLEFKKFFE (123 aa)).

It belongs to the GST superfamily. Theta family. As to quaternary structure, homodimer.

It catalyses the reaction RX + glutathione = an S-substituted glutathione + a halide anion + H(+). The catalysed reaction is 1,1,1-trichloro-2,2-bis(4-chlorophenyl)ethane = 1,1-dichloro-2,2-bis(4-chlorophenyl)ethylene + chloride + H(+). Functionally, conjugation of reduced glutathione to a wide number of exogenous and endogenous hydrophobic electrophiles. Has DDT dehydrochlorinase activity. The sequence is that of Glutathione S-transferase 1-1 (GstD1) from Drosophila sechellia (Fruit fly).